Reading from the N-terminus, the 351-residue chain is Ion-translocating oxidoreductase complex subunit D (351 aa).

A run of 4 helical transmembrane segments spans residues 18-38 (IMLL…YFFG), 40-60 (GSLI…GAVL), 87-107 (LPPL…IVIA), and 121-141 (PAMV…TSWL). Residue Thr185 is modified to FMN phosphoryl threonine. 5 helical membrane-spanning segments follow: residues 211–231 (VLAG…GLLL), 241–261 (IPVS…MIAP), 264–284 (FASP…FFIA), 298–318 (LIFG…GGYP), and 321–341 (VAFA…YTQP).

The protein belongs to the NqrB/RnfD family. In terms of assembly, the complex is composed of six subunits: RnfA, RnfB, RnfC, RnfD, RnfE and RnfG. It depends on FMN as a cofactor.

Its subcellular location is the cell inner membrane. In terms of biological role, part of a membrane-bound complex that couples electron transfer with translocation of ions across the membrane. This is Ion-translocating oxidoreductase complex subunit D from Yersinia pestis.